A 215-amino-acid chain; its full sequence is N-(5'-phosphoribosyl)anthranilate isomerase (215 aa).

It belongs to the TrpF family.

It carries out the reaction N-(5-phospho-beta-D-ribosyl)anthranilate = 1-(2-carboxyphenylamino)-1-deoxy-D-ribulose 5-phosphate. Its pathway is amino-acid biosynthesis; L-tryptophan biosynthesis; L-tryptophan from chorismate: step 3/5. This Sinorhizobium medicae (strain WSM419) (Ensifer medicae) protein is N-(5'-phosphoribosyl)anthranilate isomerase.